The primary structure comprises 121 residues: uncharacterized protein (121 aa).

The next 3 helical transmembrane spans lie at 1 to 21, 55 to 75, and 92 to 112; these read MILW…IMPV, LKYI…FCSI, and LFFK…IHFL.

Its subcellular location is the membrane. This is an uncharacterized protein from Saccharomyces cerevisiae (strain ATCC 204508 / S288c) (Baker's yeast).